The primary structure comprises 312 residues: Envelope glycoprotein K (312 aa).

The N-terminal stretch at 1–20 (MLLGGRPLHLLVLGVMGAYA) is a signal peptide. Residues 21–91 (GLGAYYATVA…VVYARRDCRA (71 aa)) lie on the Extracellular side of the membrane. N-linked (GlcNAc...) asparagine; by host glycosylation is found at asparagine 58 and asparagine 67. Residues 92–112 (YLWDVHFRLAAVAWLLYAAFV) form a helical membrane-spanning segment. At 113 to 187 (YARQERRMFG…DPITLAHRHP (75 aa)) the chain is on the cytoplasmic side. Residues 188–208 (TLIALILLELGLRLGARMALF) traverse the membrane as a helical segment. At 209 to 227 (TTLGVTRAPCALVFPLYAR) the chain is on the extracellular side. Residues 228 to 248 (ALVWIFVLAVGALELLAATLP) traverse the membrane as a helical segment. Residues 249-280 (HIARVSGATATPARSDGGRAALGVCGACCSTV) lie on the Cytoplasmic side of the membrane. A helical transmembrane segment spans residues 281–301 (LAGIFAKALYLCLLVGGVLLF). The Extracellular segment spans residues 302 to 312 (LHYERHITIFG).

This sequence belongs to the alphaherpesvirinae glycoprotein K family. As to quaternary structure, interacts (via UL20 interaction region) with protein UL20 homolog (via N-terminus); this interaction probably plays a role in the coordinate transport of protein UL20 homolog and gK to the trans-Golgi network (TGN), and is required for the cell surface expression of gK. Post-translationally, N-glycosylated.

It is found in the host cell membrane. It localises to the host endosome membrane. The protein localises to the host Golgi apparatus membrane. Functionally, glycoprotein that probably modulates membrane fusion events during secondary envelopment of cytoplasmic capsids that bud into specific trans-Golgi network (TGN)-derived membranes. The sequence is that of Envelope glycoprotein K (gK) from Sus scrofa (Pig).